The following is a 472-amino-acid chain: 3-isopropylmalate dehydratase large subunit (472 aa).

Residues Cys351, Cys412, and Cys415 each contribute to the [4Fe-4S] cluster site.

The protein belongs to the aconitase/IPM isomerase family. LeuC type 1 subfamily. As to quaternary structure, heterodimer of LeuC and LeuD. It depends on [4Fe-4S] cluster as a cofactor.

It catalyses the reaction (2R,3S)-3-isopropylmalate = (2S)-2-isopropylmalate. Its pathway is amino-acid biosynthesis; L-leucine biosynthesis; L-leucine from 3-methyl-2-oxobutanoate: step 2/4. Catalyzes the isomerization between 2-isopropylmalate and 3-isopropylmalate, via the formation of 2-isopropylmaleate. The chain is 3-isopropylmalate dehydratase large subunit from Marinobacter nauticus (strain ATCC 700491 / DSM 11845 / VT8) (Marinobacter aquaeolei).